A 310-amino-acid polypeptide reads, in one-letter code: N-acetylmuramic acid 6-phosphate etherase (310 aa).

The 164-residue stretch at 64–227 (ITSRLKSNGR…STSVMIKLGK (164 aa)) folds into the SIS domain. Glu92 (proton donor) is an active-site residue. Residue Glu123 is part of the active site.

Belongs to the GCKR-like family. MurNAc-6-P etherase subfamily. Homodimer.

The catalysed reaction is N-acetyl-D-muramate 6-phosphate + H2O = N-acetyl-D-glucosamine 6-phosphate + (R)-lactate. It functions in the pathway amino-sugar metabolism; N-acetylmuramate degradation. Its function is as follows. Specifically catalyzes the cleavage of the D-lactyl ether substituent of MurNAc 6-phosphate, producing GlcNAc 6-phosphate and D-lactate. This chain is N-acetylmuramic acid 6-phosphate etherase, found in Prochlorococcus marinus (strain NATL2A).